The following is a 328-amino-acid chain: Methionine import ATP-binding protein MetN 1 (328 aa).

The region spanning 2 to 241 (ISIERLSKTY…PLSRLGRSLL (240 aa)) is the ABC transporter domain. An ATP-binding site is contributed by 38-45 (GRSGAGKS).

The protein belongs to the ABC transporter superfamily. Methionine importer (TC 3.A.1.24) family. In terms of assembly, the complex is composed of two ATP-binding proteins (MetN), two transmembrane proteins (MetI) and a solute-binding protein (MetQ).

The protein localises to the cell inner membrane. It catalyses the reaction L-methionine(out) + ATP + H2O = L-methionine(in) + ADP + phosphate + H(+). The enzyme catalyses D-methionine(out) + ATP + H2O = D-methionine(in) + ADP + phosphate + H(+). Part of the ABC transporter complex MetNIQ involved in methionine import. Responsible for energy coupling to the transport system. This Yersinia pestis bv. Antiqua (strain Nepal516) protein is Methionine import ATP-binding protein MetN 1.